Here is a 291-residue protein sequence, read N- to C-terminus: UDP-N-acetylenolpyruvoylglucosamine reductase (291 aa).

The FAD-binding PCMH-type domain occupies 22-187; it reads RIGGPARYFK…ASATFQLTKD (166 aa). The active site involves arginine 166. The active-site Proton donor is cysteine 214. Glutamate 283 is an active-site residue.

The protein belongs to the MurB family. The cofactor is FAD.

The protein resides in the cytoplasm. The enzyme catalyses UDP-N-acetyl-alpha-D-muramate + NADP(+) = UDP-N-acetyl-3-O-(1-carboxyvinyl)-alpha-D-glucosamine + NADPH + H(+). Its pathway is cell wall biogenesis; peptidoglycan biosynthesis. In terms of biological role, cell wall formation. The polypeptide is UDP-N-acetylenolpyruvoylglucosamine reductase (Chlamydia trachomatis serovar A (strain ATCC VR-571B / DSM 19440 / HAR-13)).